The chain runs to 310 residues: Olfactory receptor 7A42 (310 aa).

At 1 to 25 (MESGNSTRRIPSFFLLGFSENPHLQ) the chain is on the extracellular side. Asparagine 5 is a glycosylation site (N-linked (GlcNAc...) asparagine). Residues 26–46 (FLIFVLFLSMYLVTVLGNLLI) form a helical membrane-spanning segment. The Cytoplasmic portion of the chain corresponds to 47-67 (IMVIITQSPLHTPMYFFLANL). A helical membrane pass occupies residues 68 to 88 (SFVDICFTSTTVPKMLVNIQT). Topologically, residues 89 to 100 (QSKAITYADCIS) are extracellular. Cysteine 98 and cysteine 190 are oxidised to a cystine. Residues 101-121 (QMSVFLVFAELDNFLLAVMAY) traverse the membrane as a helical segment. Residues 122-135 (DRYVAICHPLYYTF) are Cytoplasmic-facing. A helical transmembrane segment spans residues 136–156 (IVNQHLCILMVLLSWVVSILH). The Extracellular portion of the chain corresponds to 157-202 (AFLQSSIVLQLTFCGDVKIPHFFCELNQLSQLTCLDSLSSHLIMNL). A helical membrane pass occupies residues 203–223 (VPVLLAVISFSSILYSYFKIV). The Cytoplasmic segment spans residues 224–240 (SSICSISSVQGKYTAFS). Residues 241 to 261 (TCVSHLSIVFLFYSTGLGVYV) form a helical membrane-spanning segment. The Extracellular portion of the chain corresponds to 262–272 (SSAVVQSSHSA). A helical transmembrane segment spans residues 273–293 (ARASVMYTVVTPMLNPFIYSL). Residues 294–310 (RNKDVKKALERLLEGKL) lie on the Cytoplasmic side of the membrane.

Belongs to the G-protein coupled receptor 1 family.

It is found in the cell membrane. In terms of biological role, odorant receptor. This chain is Olfactory receptor 7A42, found in Mus musculus (Mouse).